Consider the following 323-residue polypeptide: Ribose-phosphate pyrophosphokinase (323 aa).

Residues 38–40 (DGE) and 96–97 (RQ) each bind ATP. Residues histidine 130 and aspartate 170 each coordinate Mg(2+). The active site involves lysine 193. D-ribose 5-phosphate-binding positions include arginine 195, aspartate 219, and 223–227 (DTAGT).

This sequence belongs to the ribose-phosphate pyrophosphokinase family. Class I subfamily. In terms of assembly, homohexamer. It depends on Mg(2+) as a cofactor.

Its subcellular location is the cytoplasm. It carries out the reaction D-ribose 5-phosphate + ATP = 5-phospho-alpha-D-ribose 1-diphosphate + AMP + H(+). It functions in the pathway metabolic intermediate biosynthesis; 5-phospho-alpha-D-ribose 1-diphosphate biosynthesis; 5-phospho-alpha-D-ribose 1-diphosphate from D-ribose 5-phosphate (route I): step 1/1. Functionally, involved in the biosynthesis of the central metabolite phospho-alpha-D-ribosyl-1-pyrophosphate (PRPP) via the transfer of pyrophosphoryl group from ATP to 1-hydroxyl of ribose-5-phosphate (Rib-5-P). This is Ribose-phosphate pyrophosphokinase from Chlorobaculum tepidum (strain ATCC 49652 / DSM 12025 / NBRC 103806 / TLS) (Chlorobium tepidum).